A 529-amino-acid polypeptide reads, in one-letter code: Peptide chain release factor 3 (529 aa).

The region spanning 11–280 is the tr-type G domain; it reads AARRTFAIIS…GLVAWAPPPM (270 aa). GTP is bound by residues 20–27, 88–92, and 142–145; these read SHPDAGKT, DTPGH, and NKVD.

It belongs to the TRAFAC class translation factor GTPase superfamily. Classic translation factor GTPase family. PrfC subfamily.

It localises to the cytoplasm. Functionally, increases the formation of ribosomal termination complexes and stimulates activities of RF-1 and RF-2. It binds guanine nucleotides and has strong preference for UGA stop codons. It may interact directly with the ribosome. The stimulation of RF-1 and RF-2 is significantly reduced by GTP and GDP, but not by GMP. This Sodalis glossinidius (strain morsitans) protein is Peptide chain release factor 3.